Consider the following 148-residue polypeptide: MIIIIKNCDKPLLNFKEMEMQTKCDLELRLLTSSYDSDFHSSLDESSSSEISQPKQESQILTIFYNGHMCVSSDLTHLEANAILSLASRDVEEKSLSLRSSDGSDPPTIPNNSTRFHYQKASMKRSLHSFLQKRSLRIQATSPYHRYR.

The 36-residue stretch at 54–89 (PKQESQILTIFYNGHMCVSSDLTHLEANAILSLASR) folds into the Tify domain.

It belongs to the TIFY/JAZ family. In terms of processing, ubiquitinated. Targeted for degradation by the SCF(COI1) E3 ubiquitin ligase-proteasome pathway during jasmonate signaling.

It is found in the nucleus. In terms of biological role, repressor of jasmonate responses. The protein is Protein TIFY 5B (TIFY 5B) of Arabidopsis thaliana (Mouse-ear cress).